The following is a 279-amino-acid chain: Syntaxin-21 (279 aa).

The segment at 1–34 (MSFQDLEAGTRSPAPNRFTGGRQQRPSSRGDPSQ) is disordered. N-acetylserine is present on Ser2. Residues 2-258 (SFQDLEAGTR…AKTQRSNSSL (257 aa)) lie on the Cytoplasmic side of the membrane. The span at 21-31 (GRQQRPSSRGD) shows a compositional bias: polar residues. Residues 65–94 (ELRDKLQKTRLQISELVKNTSAKLKEASEA) are a coiled coil. The t-SNARE coiled-coil homology domain maps to 186–248 (EAIIEEREQG…TQATVQLRKA (63 aa)). A helical; Anchor for type IV membrane protein transmembrane segment spans residues 259–279 (TCLLILIFGIVLLIVIIVVLV).

This sequence belongs to the syntaxin family. Interacts with VTI11 and SYP51 to form a t-SNARE complex and with alpha-SNAP to form a 20S complex. In terms of tissue distribution, a high level expression is seen in the roots while a low level expression is seen in the leaves.

It localises to the prevacuolar compartment membrane. May function in the docking or fusion of transport vesicles with the prevacuolar membrane. The protein is Syntaxin-21 (SYP21) of Arabidopsis thaliana (Mouse-ear cress).